Consider the following 187-residue polypeptide: NADH-quinone oxidoreductase subunit B (187 aa).

[4Fe-4S] cluster-binding residues include Cys-51, Cys-52, Cys-117, and Cys-149.

It belongs to the complex I 20 kDa subunit family. In terms of assembly, NDH-1 is composed of 14 different subunits. Subunits NuoB, C, D, E, F, and G constitute the peripheral sector of the complex. [4Fe-4S] cluster is required as a cofactor.

It is found in the cell inner membrane. It carries out the reaction a quinone + NADH + 5 H(+)(in) = a quinol + NAD(+) + 4 H(+)(out). Its function is as follows. NDH-1 shuttles electrons from NADH, via FMN and iron-sulfur (Fe-S) centers, to quinones in the respiratory chain. The immediate electron acceptor for the enzyme in this species is believed to be ubiquinone. Couples the redox reaction to proton translocation (for every two electrons transferred, four hydrogen ions are translocated across the cytoplasmic membrane), and thus conserves the redox energy in a proton gradient. This Nitratidesulfovibrio vulgaris (strain DSM 19637 / Miyazaki F) (Desulfovibrio vulgaris) protein is NADH-quinone oxidoreductase subunit B.